A 142-amino-acid chain; its full sequence is Hemoglobin subunit alpha (142 aa).

One can recognise a Globin domain in the interval 2 to 142; sequence HLTADDKKHI…VSNVLTSKYR (141 aa). Residues H59 and H88 each coordinate heme b.

Belongs to the globin family. As to quaternary structure, heterotetramer of two alpha chains and two beta chains. Red blood cells.

Functionally, involved in oxygen transport from the lung to the various peripheral tissues. The sequence is that of Hemoglobin subunit alpha (hba-A) from Xenopus tropicalis (Western clawed frog).